Reading from the N-terminus, the 160-residue chain is ATP synthase subunit b (160 aa).

The helical transmembrane segment at 5-27 (IEQILTQIIAFLIMLGVLKKFVW) threads the bilayer.

It belongs to the ATPase B chain family. F-type ATPases have 2 components, F(1) - the catalytic core - and F(0) - the membrane proton channel. F(1) has five subunits: alpha(3), beta(3), gamma(1), delta(1), epsilon(1). F(0) has three main subunits: a(1), b(2) and c(10-14). The alpha and beta chains form an alternating ring which encloses part of the gamma chain. F(1) is attached to F(0) by a central stalk formed by the gamma and epsilon chains, while a peripheral stalk is formed by the delta and b chains.

Its subcellular location is the cell inner membrane. Its function is as follows. F(1)F(0) ATP synthase produces ATP from ADP in the presence of a proton or sodium gradient. F-type ATPases consist of two structural domains, F(1) containing the extramembraneous catalytic core and F(0) containing the membrane proton channel, linked together by a central stalk and a peripheral stalk. During catalysis, ATP synthesis in the catalytic domain of F(1) is coupled via a rotary mechanism of the central stalk subunits to proton translocation. Component of the F(0) channel, it forms part of the peripheral stalk, linking F(1) to F(0). This Protochlamydia amoebophila (strain UWE25) protein is ATP synthase subunit b.